The following is a 120-amino-acid chain: UPF0102 protein FRAAL5785 (120 aa).

Belongs to the UPF0102 family.

This Frankia alni (strain DSM 45986 / CECT 9034 / ACN14a) protein is UPF0102 protein FRAAL5785.